The chain runs to 235 residues: Protein FEV (235 aa).

Positions 58-138 (IQLWQFLLEL…HGKRYAYKFD (81 aa)) form a DNA-binding region, ETS.

It belongs to the ETS family. Expressed by serotonergic neurons in anterior and posterior raphe.

The protein localises to the nucleus. Functionally, functions as a transcriptional regulator. Functions in the differentiation and the maintenance of the central serotonergic neurons. May play a role in cell growth. In Danio rerio (Zebrafish), this protein is Protein FEV (fev).